Consider the following 64-residue polypeptide: Putative antitoxin VapB4 (64 aa).

It belongs to the UPF0165 family.

Its function is as follows. Possibly the antitoxin component of a type II toxin-antitoxin (TA) system. Its cognate toxin is VapC4 (Potential). In Archaeoglobus fulgidus (strain ATCC 49558 / DSM 4304 / JCM 9628 / NBRC 100126 / VC-16), this protein is Putative antitoxin VapB4 (vapB4).